We begin with the raw amino-acid sequence, 138 residues long: 1,4-dihydroxy-2-naphthoyl-CoA hydrolase (138 aa).

Residue Asp-16 is part of the active site.

This sequence belongs to the 4-hydroxybenzoyl-CoA thioesterase family. DHNA-CoA hydrolase subfamily.

The enzyme catalyses 1,4-dihydroxy-2-naphthoyl-CoA + H2O = 1,4-dihydroxy-2-naphthoate + CoA + H(+). It functions in the pathway cofactor biosynthesis; phylloquinone biosynthesis. Its pathway is quinol/quinone metabolism; 1,4-dihydroxy-2-naphthoate biosynthesis; 1,4-dihydroxy-2-naphthoate from chorismate: step 7/7. In terms of biological role, catalyzes the specific hydrolysis of 1,4-dihydroxy-2-naphthoyl-CoA (DHNA-CoA) to 1,4-dihydroxy-2-naphthoate (DHNA), a reaction involved in phylloquinone (vitamin K1) biosynthesis. Is not active on benzoyl-CoA, phenylacetyl-CoA and aliphatic acyl-CoA thioesters. The chain is 1,4-dihydroxy-2-naphthoyl-CoA hydrolase from Synechocystis sp. (strain ATCC 27184 / PCC 6803 / Kazusa).